Reading from the N-terminus, the 339-residue chain is Holliday junction branch migration complex subunit RuvB (339 aa).

The interval 2–187 is large ATPase domain (RuvB-L); that stretch reads KDVNDEERII…FGIIEHMQYY (186 aa). ATP-binding positions include leucine 26, arginine 27, glycine 68, lysine 71, threonine 72, threonine 73, 134–136, arginine 177, tyrosine 187, and arginine 224; that span reads EDF. Residue threonine 72 participates in Mg(2+) binding. The tract at residues 188-258 is small ATPAse domain (RuvB-S); it reads SIDDLEKIIQ…TTKHSLHLLE (71 aa). Residues 261-339 form a head domain (RuvB-H) region; the sequence is DEGLDQTDRK…QLGYPPKKAE (79 aa). DNA is bound by residues arginine 316 and arginine 321.

The protein belongs to the RuvB family. In terms of assembly, homohexamer. Forms an RuvA(8)-RuvB(12)-Holliday junction (HJ) complex. HJ DNA is sandwiched between 2 RuvA tetramers; dsDNA enters through RuvA and exits via RuvB. An RuvB hexamer assembles on each DNA strand where it exits the tetramer. Each RuvB hexamer is contacted by two RuvA subunits (via domain III) on 2 adjacent RuvB subunits; this complex drives branch migration. In the full resolvosome a probable DNA-RuvA(4)-RuvB(12)-RuvC(2) complex forms which resolves the HJ.

It localises to the cytoplasm. The catalysed reaction is ATP + H2O = ADP + phosphate + H(+). Functionally, the RuvA-RuvB-RuvC complex processes Holliday junction (HJ) DNA during genetic recombination and DNA repair, while the RuvA-RuvB complex plays an important role in the rescue of blocked DNA replication forks via replication fork reversal (RFR). RuvA specifically binds to HJ cruciform DNA, conferring on it an open structure. The RuvB hexamer acts as an ATP-dependent pump, pulling dsDNA into and through the RuvAB complex. RuvB forms 2 homohexamers on either side of HJ DNA bound by 1 or 2 RuvA tetramers; 4 subunits per hexamer contact DNA at a time. Coordinated motions by a converter formed by DNA-disengaged RuvB subunits stimulates ATP hydrolysis and nucleotide exchange. Immobilization of the converter enables RuvB to convert the ATP-contained energy into a lever motion, pulling 2 nucleotides of DNA out of the RuvA tetramer per ATP hydrolyzed, thus driving DNA branch migration. The RuvB motors rotate together with the DNA substrate, which together with the progressing nucleotide cycle form the mechanistic basis for DNA recombination by continuous HJ branch migration. Branch migration allows RuvC to scan DNA until it finds its consensus sequence, where it cleaves and resolves cruciform DNA. In Lactobacillus gasseri (strain ATCC 33323 / DSM 20243 / BCRC 14619 / CIP 102991 / JCM 1131 / KCTC 3163 / NCIMB 11718 / NCTC 13722 / AM63), this protein is Holliday junction branch migration complex subunit RuvB.